The chain runs to 138 residues: Large ribosomal subunit protein uL16 (138 aa).

A compositionally biased stretch (basic residues) spans 1-13 (MLQPKRRKYRKEQ). Residues 1 to 20 (MLQPKRRKYRKEQKGRNTGI) form a disordered region.

The protein belongs to the universal ribosomal protein uL16 family. As to quaternary structure, part of the 50S ribosomal subunit.

Binds 23S rRNA and is also seen to make contacts with the A and possibly P site tRNAs. The polypeptide is Large ribosomal subunit protein uL16 (Ralstonia nicotianae (strain ATCC BAA-1114 / GMI1000) (Ralstonia solanacearum)).